Reading from the N-terminus, the 235-residue chain is Ribitol-5-phosphate cytidylyltransferase (235 aa).

Residues 7–10, 82–88, and Ser113 contribute to the CTP site; these read LAGG and GADRNTS.

The protein belongs to the IspD/TarI cytidylyltransferase family. TarI subfamily.

It catalyses the reaction D-ribitol 5-phosphate + CTP + H(+) = CDP-L-ribitol + diphosphate. It functions in the pathway cell wall biogenesis; poly(ribitol phosphate) teichoic acid biosynthesis. Catalyzes the transfer of the cytidylyl group of CTP to D-ribitol 5-phosphate. In Streptococcus pneumoniae serotype 19F (strain G54), this protein is Ribitol-5-phosphate cytidylyltransferase.